A 1162-amino-acid chain; its full sequence is DNA-directed RNA polymerase subunit beta (1162 aa).

Belongs to the RNA polymerase beta chain family. The RNAP catalytic core consists of 2 alpha, 1 beta, 1 beta' and 1 omega subunit. When a sigma factor is associated with the core the holoenzyme is formed, which can initiate transcription.

The catalysed reaction is RNA(n) + a ribonucleoside 5'-triphosphate = RNA(n+1) + diphosphate. Functionally, DNA-dependent RNA polymerase catalyzes the transcription of DNA into RNA using the four ribonucleoside triphosphates as substrates. The polypeptide is DNA-directed RNA polymerase subunit beta (Clavibacter sepedonicus (Clavibacter michiganensis subsp. sepedonicus)).